The primary structure comprises 332 residues: Protein FAM9A (332 aa).

The span at 1 to 13 shows a compositional bias: basic residues; sequence MEPVGRKRSRKAA. 2 disordered regions span residues 1–114 and 186–293; these read MEPV…EHTG and QKDD…PTGV. Composition is skewed to basic and acidic residues over residues 74–91 and 98–114; these read GKDP…FTET and DEHG…EHTG. Over residues 196 to 217 the composition is skewed to low complexity; it reads AAAAAAEAAAAAEAAAAAAEVI. Acidic residues predominate over residues 218-275; it reads VVEDEEEEEKEEEEEKEEEEEEGEEEGGGEEGEEGGGGGEGEETEEEEEEEEEEEEEE. Basic and acidic residues predominate over residues 276 to 285; it reads QIKAFQEKQK.

Belongs to the XLR/SYCP3 family. Expressed exclusively in testis.

Its subcellular location is the nucleus. It localises to the nucleolus. The chain is Protein FAM9A from Homo sapiens (Human).